The chain runs to 146 residues: VEWSSSERSTITSLWGKVIPAEIGPVAFARVLIVYPWTQRYFGNFGDLSNIAAISGNAKVAAHGKVVLDGVDKAVKNLDNIKGAYTSLSLLHSEKLNVDPDNFKLLGDCLTIVLATKFGAEFTPKVQAVWQKFLIVLIHALSRQYF.

Residues 2 to 146 form the Globin domain; that stretch reads EWSSSERSTI…LIHALSRQYF (145 aa). Residues histidine 63 and histidine 92 each coordinate heme b.

It belongs to the globin family. In terms of assembly, heterotetramer of two alpha chains and two beta chains. In terms of tissue distribution, red blood cells.

In terms of biological role, involved in oxygen transport from gills to the various peripheral tissues. The protein is Hemoglobin cathodic subunit beta of Gymnothorax unicolor (Brown moray).